Reading from the N-terminus, the 357-residue chain is Glutamine synthetase cytosolic isozyme (357 aa).

Positions V20–G100 constitute a GS beta-grasp domain. The 251-residue stretch at K107–P357 folds into the GS catalytic domain.

The protein belongs to the glutamine synthetase family. Homooctamer.

The protein localises to the cytoplasm. The catalysed reaction is L-glutamate + NH4(+) + ATP = L-glutamine + ADP + phosphate + H(+). The sequence is that of Glutamine synthetase cytosolic isozyme from Pinus sylvestris (Scotch pine).